Here is a 631-residue protein sequence, read N- to C-terminus: Poly(A)-specific ribonuclease PARN (631 aa).

A divalent metal cation is bound by residues Asp28 and Glu30. A disordered region spans residues 147–173 (EDRRSQSNGASTMSYISPNSSKTPVSI). The span at 152-170 (QSNGASTMSYISPNSSKTP) shows a compositional bias: polar residues. The R3H domain maps to 178-244 (KGFIDKVVER…ERYIVISKVD (67 aa)). 2 residues coordinate a divalent metal cation: Asp291 and Asp381. Residues 568–631 (SPIQEEAASD…SVLFEVPDTW (64 aa)) are disordered.

It belongs to the CAF1 family. As to quaternary structure, component of a complex at least composed of cpeb1, cpsf1, papd4/gld2, pabpc1/ePAB, parn and sympk. Requires a divalent metal cation as cofactor. In terms of processing, a 62 kDa form, which is produced by proteolytic cleavage, also exists. In retina, it is constitutively present in most retinal cells, including the photoreceptors.

The protein localises to the cytoplasm. Its subcellular location is the nucleus. The catalysed reaction is Exonucleolytic cleavage of poly(A) to 5'-AMP.. Its function is as follows. 3'-exoribonuclease that has a preference for poly(A) tails of mRNAs, thereby efficiently degrading poly(A) tails. Exonucleolytic degradation of the poly(A) tail is often the first step in the decay of eukaryotic mRNAs. Required during meiotic maturation to silence certain maternal mRNAs translationally. Does not require an adenosine residue at the 3' end, however, the addition of 25 non-adenylate residues at the 3' terminus, or a 3' terminal phosphate is inhibitory. Involved in dormant mRNAs regulation during oocyte maturation by counteracting polyadenylation mediated by papd4/gld2nt in immature eggs. During maturation it is excluded from the ribonucleoprotein complex, allowing poly(A) elongation by papd4/gld2nt and activation of mRNAs. The polypeptide is Poly(A)-specific ribonuclease PARN (parn) (Xenopus laevis (African clawed frog)).